The sequence spans 349 residues: Galactose-1-phosphate uridylyltransferase (349 aa).

29-32 (RAKR) is a binding site for UDP-alpha-D-glucose. Zn(2+) is bound by residues cysteine 53 and cysteine 56. UDP-alpha-D-glucose is bound at residue 78–79 (ND). Histidine 116 is a binding site for Zn(2+). Residues asparagine 154 and 160-162 (GCS) contribute to the UDP-alpha-D-glucose site. Histidine 165 is a Zn(2+) binding site. The active-site Tele-UMP-histidine intermediate is histidine 167. Glutamine 169 is a binding site for UDP-alpha-D-glucose. Positions 183, 282, 297, and 299 each coordinate Fe cation. UDP-alpha-D-glucose contacts are provided by residues 312-313 (KF), 317-318 (YE), and glutamine 324.

It belongs to the galactose-1-phosphate uridylyltransferase type 1 family. Requires Zn(2+) as cofactor.

The enzyme catalyses alpha-D-galactose 1-phosphate + UDP-alpha-D-glucose = alpha-D-glucose 1-phosphate + UDP-alpha-D-galactose. Its pathway is carbohydrate metabolism; galactose metabolism. This Haemophilus influenzae (strain ATCC 51907 / DSM 11121 / KW20 / Rd) protein is Galactose-1-phosphate uridylyltransferase (galT).